We begin with the raw amino-acid sequence, 395 residues long: ATP phosphoribosyltransferase regulatory subunit (395 aa).

This sequence belongs to the class-II aminoacyl-tRNA synthetase family. HisZ subfamily. In terms of assembly, heteromultimer composed of HisG and HisZ subunits.

Its subcellular location is the cytoplasm. The protein operates within amino-acid biosynthesis; L-histidine biosynthesis; L-histidine from 5-phospho-alpha-D-ribose 1-diphosphate: step 1/9. Required for the first step of histidine biosynthesis. May allow the feedback regulation of ATP phosphoribosyltransferase activity by histidine. The sequence is that of ATP phosphoribosyltransferase regulatory subunit from Pseudomonas savastanoi pv. phaseolicola (strain 1448A / Race 6) (Pseudomonas syringae pv. phaseolicola (strain 1448A / Race 6)).